The following is a 93-amino-acid chain: Large ribosomal subunit protein uL23 (93 aa).

This sequence belongs to the universal ribosomal protein uL23 family. In terms of assembly, part of the 50S ribosomal subunit. Contacts protein L29, and trigger factor when it is bound to the ribosome.

Functionally, one of the early assembly proteins it binds 23S rRNA. One of the proteins that surrounds the polypeptide exit tunnel on the outside of the ribosome. Forms the main docking site for trigger factor binding to the ribosome. The polypeptide is Large ribosomal subunit protein uL23 (Nautilia profundicola (strain ATCC BAA-1463 / DSM 18972 / AmH)).